The chain runs to 228 residues: Sodium channel regulatory subunit beta-4 (228 aa).

Positions 1-30 (MSRAGNRGNTQARWLGTGLLGLFLLPMYLS) are cleaved as a signal peptide. The region spanning 31–148 (LEVSVGKATT…KDLNNSATIF (118 aa)) is the Ig-like C2-type domain. Over 31-161 (LEVSVGKATT…VDKLEKVDNT (131 aa)) the chain is Extracellular. N-linked (GlcNAc...) asparagine glycans are attached at residues N45, N71, N113, and N142. C53 and C131 are oxidised to a cystine. Residues 162–182 (VTLIILAVVGGVIGLLVCILL) traverse the membrane as a helical segment. The Cytoplasmic portion of the chain corresponds to 183–228 (LKKLITFILKKTREKKKECLVSSSGNDNTENGLPGSKAEEKPPTKV). The segment at 199–228 (KECLVSSSGNDNTENGLPGSKAEEKPPTKV) is disordered. Positions 203–213 (VSSSGNDNTEN) are enriched in polar residues. Residues 219 to 228 (KAEEKPPTKV) are compositionally biased toward basic and acidic residues.

The protein belongs to the sodium channel auxiliary subunit SCN4B (TC 8.A.17) family. A voltage-gated sodium (Nav) channel consists of an ion-conducting pore-forming alpha subunit functional on its own that is regulated by one or more beta subunits. The beta subunit SCN4B is disulfide-linked to the pore-forming alpha subunit. Interacts with SCN1A; regulatory subunit of SCN1A/Nav1.1. Interacts with SCN2A; regulatory subunit of SCN2A/Nav1.2. Contains an interchain disulfide bond with SCN2A.

The protein localises to the cell membrane. Regulatory subunit of multiple voltage-gated sodium (Nav) channels directly mediating the depolarization of excitable membranes. Navs, also called VGSCs (voltage-gated sodium channels) or VDSCs (voltage-dependent sodium channels), operate by switching between closed and open conformations depending on the voltage difference across the membrane. In the open conformation they allow Na(+) ions to selectively pass through the pore, along their electrochemical gradient. The influx of Na+ ions provokes membrane depolarization, initiating the propagation of electrical signals throughout cells and tissues. The accessory beta subunits participate in localization and functional modulation of the Nav channels. Modulates the activity of SCN1A/Nav1.1. Modulates the activity of SCN2A/Nav1.2. The protein is Sodium channel regulatory subunit beta-4 of Mus musculus (Mouse).